The following is a 437-amino-acid chain: Trigger factor (437 aa).

The PPIase FKBP-type domain maps to 163–248 (GHMVTIDYAF…LNEIKRKELP (86 aa)).

This sequence belongs to the FKBP-type PPIase family. Tig subfamily.

The protein localises to the cytoplasm. The catalysed reaction is [protein]-peptidylproline (omega=180) = [protein]-peptidylproline (omega=0). Functionally, involved in protein export. Acts as a chaperone by maintaining the newly synthesized protein in an open conformation. Functions as a peptidyl-prolyl cis-trans isomerase. The protein is Trigger factor of Pelobacter propionicus (strain DSM 2379 / NBRC 103807 / OttBd1).